A 232-amino-acid polypeptide reads, in one-letter code: 5'-methylthioadenosine/S-adenosylhomocysteine nucleosidase (232 aa).

Glu-12 serves as the catalytic Proton acceptor. Residues Gly-78, Met-153, and 174–175 (ME) contribute to the substrate site. Asp-198 acts as the Proton donor in catalysis.

It belongs to the PNP/UDP phosphorylase family. MtnN subfamily.

It catalyses the reaction S-adenosyl-L-homocysteine + H2O = S-(5-deoxy-D-ribos-5-yl)-L-homocysteine + adenine. The catalysed reaction is S-methyl-5'-thioadenosine + H2O = 5-(methylsulfanyl)-D-ribose + adenine. The enzyme catalyses 5'-deoxyadenosine + H2O = 5-deoxy-D-ribose + adenine. The protein operates within amino-acid biosynthesis; L-methionine biosynthesis via salvage pathway; S-methyl-5-thio-alpha-D-ribose 1-phosphate from S-methyl-5'-thioadenosine (hydrolase route): step 1/2. Its function is as follows. Catalyzes the irreversible cleavage of the glycosidic bond in both 5'-methylthioadenosine (MTA) and S-adenosylhomocysteine (SAH/AdoHcy) to adenine and the corresponding thioribose, 5'-methylthioribose and S-ribosylhomocysteine, respectively. Also cleaves 5'-deoxyadenosine, a toxic by-product of radical S-adenosylmethionine (SAM) enzymes, into 5-deoxyribose and adenine. The protein is 5'-methylthioadenosine/S-adenosylhomocysteine nucleosidase of Anoxybacillus flavithermus (strain DSM 21510 / WK1).